The sequence spans 668 residues: CLK4-associating serine/arginine rich protein (668 aa).

Ser101 carries the post-translational modification Phosphoserine. Disordered regions lie at residues 173-232 (AEVE…GMAD) and 252-668 (AKAL…HYRH). Residues 182 to 214 (PEEEESPAEEESNSDEDEVIPDIDVEVDVDELN) are compositionally biased toward acidic residues. The span at 265-283 (RRSRRQRREFREKRLRGRK) shows a compositional bias: basic residues. Phosphoserine is present on residues Ser285 and Ser294. A compositionally biased stretch (basic and acidic residues) spans 290–313 (ARRDSPTYDPYKRSPSESSSESRS). Position 327 is a phosphothreonine (Thr327). A phosphoserine mark is found at Ser331 and Ser335. A compositionally biased stretch (low complexity) spans 340-353 (AAAAAAAAASGAAP). Pro residues predominate over residues 354–365 (GKPPAPPQPGGP). Low complexity predominate over residues 378-395 (SSSSASRTSSSRSSSRSS). A compositionally biased stretch (basic residues) spans 396-435 (SRSRRGYYRSGRHARSRSRSWSRSRSRSRRYSRSRSRGRR). Basic and acidic residues predominate over residues 436–446 (HSDGGSRDGHR). The span at 475–486 (RGARGPRHHSSS) shows a compositional bias: basic residues. 2 stretches are compositionally biased toward low complexity: residues 487 to 510 (HSRSSWSLSPSRSRSLTRSGSRSQ) and 518 to 527 (QSHSQSQSHS). Ser541 is subject to Phosphoserine. Phosphothreonine is present on Thr567. Positions 579–641 (ALNRQFKADK…ERQYSRQSRS (63 aa)) form a coiled coil. 2 stretches are compositionally biased toward basic and acidic residues: residues 584-611 (FKADKKAAQEKMIQQEHERQEREDELRA) and 619-635 (KERERREKEREEWERQY). Positions 636-645 (SRQSRSPSPR) are enriched in low complexity. Positions 653 to 668 (SRRRSRSRSRSPHYRH) are enriched in basic residues.

This sequence belongs to the splicing factor SR family. Probably interacts with CLK4. Post-translationally, phosphorylated in vitro by CLK4.

Its subcellular location is the nucleus. In terms of biological role, probably functions as an alternative splicing regulator. May regulate the mRNA splicing of genes such as CLK1. May act by regulating members of the CLK kinase family. This chain is CLK4-associating serine/arginine rich protein (Clasrp), found in Rattus norvegicus (Rat).